Here is a 250-residue protein sequence, read N- to C-terminus: NADH-quinone oxidoreductase subunit C (250 aa).

It belongs to the complex I 30 kDa subunit family. As to quaternary structure, NDH-1 is composed of 14 different subunits. Subunits NuoB, C, D, E, F, and G constitute the peripheral sector of the complex.

The protein localises to the cell inner membrane. It catalyses the reaction a quinone + NADH + 5 H(+)(in) = a quinol + NAD(+) + 4 H(+)(out). Functionally, NDH-1 shuttles electrons from NADH, via FMN and iron-sulfur (Fe-S) centers, to quinones in the respiratory chain. The immediate electron acceptor for the enzyme in this species is believed to be ubiquinone. Couples the redox reaction to proton translocation (for every two electrons transferred, four hydrogen ions are translocated across the cytoplasmic membrane), and thus conserves the redox energy in a proton gradient. The chain is NADH-quinone oxidoreductase subunit C from Xanthomonas campestris pv. campestris (strain 8004).